The following is a 433-amino-acid chain: 3-phosphoshikimate 1-carboxyvinyltransferase (433 aa).

Residues lysine 22, serine 23, and arginine 27 each contribute to the 3-phosphoshikimate site. Phosphoenolpyruvate is bound at residue lysine 22. Phosphoenolpyruvate-binding residues include glycine 96 and arginine 129. Residues serine 175, serine 176, glutamine 177, serine 203, aspartate 318, asparagine 341, and lysine 345 each contribute to the 3-phosphoshikimate site. A phosphoenolpyruvate-binding site is contributed by glutamine 177. Aspartate 318 serves as the catalytic Proton acceptor. 3 residues coordinate phosphoenolpyruvate: arginine 349, arginine 393, and lysine 418.

This sequence belongs to the EPSP synthase family. In terms of assembly, monomer.

The protein resides in the cytoplasm. It catalyses the reaction 3-phosphoshikimate + phosphoenolpyruvate = 5-O-(1-carboxyvinyl)-3-phosphoshikimate + phosphate. It functions in the pathway metabolic intermediate biosynthesis; chorismate biosynthesis; chorismate from D-erythrose 4-phosphate and phosphoenolpyruvate: step 6/7. Its function is as follows. Catalyzes the transfer of the enolpyruvyl moiety of phosphoenolpyruvate (PEP) to the 5-hydroxyl of shikimate-3-phosphate (S3P) to produce enolpyruvyl shikimate-3-phosphate and inorganic phosphate. The sequence is that of 3-phosphoshikimate 1-carboxyvinyltransferase from Mannheimia succiniciproducens (strain KCTC 0769BP / MBEL55E).